We begin with the raw amino-acid sequence, 496 residues long: Probable cytosol aminopeptidase (496 aa).

2 residues coordinate Mn(2+): K264 and D269. K276 is a catalytic residue. D287, D346, and E348 together coordinate Mn(2+). Residue R350 is part of the active site.

Belongs to the peptidase M17 family. Mn(2+) is required as a cofactor.

It is found in the cytoplasm. The catalysed reaction is Release of an N-terminal amino acid, Xaa-|-Yaa-, in which Xaa is preferably Leu, but may be other amino acids including Pro although not Arg or Lys, and Yaa may be Pro. Amino acid amides and methyl esters are also readily hydrolyzed, but rates on arylamides are exceedingly low.. It carries out the reaction Release of an N-terminal amino acid, preferentially leucine, but not glutamic or aspartic acids.. Functionally, presumably involved in the processing and regular turnover of intracellular proteins. Catalyzes the removal of unsubstituted N-terminal amino acids from various peptides. The polypeptide is Probable cytosol aminopeptidase (Geobacter sulfurreducens (strain ATCC 51573 / DSM 12127 / PCA)).